Here is a 506-residue protein sequence, read N- to C-terminus: (+)-vincadifformine 19-hydroxylase (506 aa).

Residues 1 to 4 lie on the Lumenal side of the membrane; the sequence is MELD. Residues 5-25 form a helical membrane-spanning segment; that stretch reads ECSPSIFIISFIFIAISIAIL. Topologically, residues 26–506 are cytoplasmic; sequence RRIRPKKTKA…DLHLIPTSYM (481 aa). Heme is bound at residue Cys450.

This sequence belongs to the cytochrome P450 family. The cofactor is heme. In terms of tissue distribution, accumulates progressively in roots.

The protein resides in the endoplasmic reticulum membrane. The enzyme catalyses (+)-vincadifformine + reduced [NADPH--hemoprotein reductase] + O2 = (+)-minovincinine + oxidized [NADPH--hemoprotein reductase] + H2O + H(+). It functions in the pathway alkaloid biosynthesis. The enantiomer (-)-vincadifformine acts as a competitive inhibitor. In terms of biological role, component of the monoterpenoid indole alkaloids (MIAs, e.g. echitovenine, tabersonine, lochnericine, 19-hydroxytabersonine and horhammericine) biosynthetic pathway; MIAs are used in cancer treatment and other medical applications. Cytochrome P450 catalyzing the hydroxylation of (+)-vincadifformine to (+)-minovincinine. This Catharanthus roseus (Madagascar periwinkle) protein is (+)-vincadifformine 19-hydroxylase.